Here is a 228-residue protein sequence, read N- to C-terminus: Putative elongation factor Tu-like protein (228 aa).

Residues 6–212 (KPHINVGTIG…LPIREKDNPF (207 aa)) enclose the tr-type G domain. Positions 15 to 22 (GHVDHGKT) are G1. A G2 region spans residues 59–63 (GITIS). The segment at 80–83 (DCPG) is G3. The G4 stretch occupies residues 135-138 (NKCD). The G5 stretch occupies residues 173-175 (SAV).

It belongs to the TRAFAC class translation factor GTPase superfamily. Classic translation factor GTPase family. EF-Tu/EF-1A subfamily.

The protein is Putative elongation factor Tu-like protein of Ehrlichia ruminantium (strain Welgevonden).